Consider the following 110-residue polypeptide: MKKALQVAMFSLFTVIGFNAQANEHHHETMSEAQPQVISATGVVKGVDLESKKITIHHDPIAAVNWPEMTMRFTITPQTKMSEIKTGDKVAFNFVQQGNLSLLQDIKVSQ.

The signal sequence occupies residues 1–21; it reads MKKALQVAMFSLFTVIGFNAQ.

The cus efflux system is composed of CusA, CusB, CusC and CusF.

It is found in the periplasm. Functionally, part of a cation efflux system that mediates resistance to copper and silver. Binds one copper per polypeptide. This is Cation efflux system protein CusF (cusF) from Escherichia coli O6:H1 (strain CFT073 / ATCC 700928 / UPEC).